Reading from the N-terminus, the 277-residue chain is uncharacterized protein (277 aa).

32 to 39 contacts ATP; sequence GPQGSGKS.

It belongs to the GLYK kinase family.

The protein resides in the cytoplasm. The protein localises to the nucleus. Has a role in meiosis. This is an uncharacterized protein from Schizosaccharomyces pombe (strain 972 / ATCC 24843) (Fission yeast).